Reading from the N-terminus, the 605-residue chain is 9-cis-epoxycarotenoid dioxygenase NCED1, chloroplastic (605 aa).

The transit peptide at 1 to 16 (MATTTSHATNTWIKTK) directs the protein to the chloroplast. The tract at residues 55 to 89 (ILHFPKQSSNYQTPKNNTISHPKQENNNSSSSSTS) is disordered. The segment covering 60 to 75 (KQSSNYQTPKNNTISH) has biased composition (polar residues). Residues 80-89 (NNNSSSSSTS) are compositionally biased toward low complexity. Histidine 302, histidine 351, histidine 416, and histidine 592 together coordinate Fe cation.

Belongs to the carotenoid oxygenase family. Fe(2+) is required as a cofactor. Expressed in developing and ripening fruits. Highly expressed in pulp. Observed in unpollinated ovaries (e.g. ovules, placenta and pericarp). Expressed in flowers.

The protein resides in the plastid. It localises to the chloroplast stroma. The catalysed reaction is a 9-cis-epoxycarotenoid + O2 = a 12'-apo-carotenal + 2-cis,4-trans-xanthoxin. It carries out the reaction 9-cis-violaxanthin + O2 = (3S,5R,6S)-5,6-epoxy-3-hydroxy-5,6-dihydro-12'-apo-beta-caroten-12'-al + 2-cis,4-trans-xanthoxin. The enzyme catalyses 9'-cis-neoxanthin + O2 = (3S,5R,6R)-3,5-dihydroxy-6,7-didehydro-5,6-dihydro-12'-apo-beta-caroten-12'-al + 2-cis,4-trans-xanthoxin. Its pathway is plant hormone biosynthesis; abscisate biosynthesis. Has a 11,12(11',12') 9-cis epoxycarotenoid cleavage activity. Catalyzes the first step of abscisic-acid (ABA) biosynthesis from carotenoids. Required for ABA accumulation upon drought. Required for ABA-mediated regulation of anther/pollen development, including metabolism, cell wall modification and transcription level. Positive regulator of fruit ripening involved in the biosynthesis of abscisic acid (ABA); initiates ABA biosynthesis at the onset of fruit ripening. Modulates the degree of pigmentation and carotenoid composition as well as pectin catabolism during ripening and may regulate the ethylene production and action in climacteric tomato fruit. This is 9-cis-epoxycarotenoid dioxygenase NCED1, chloroplastic from Solanum lycopersicum (Tomato).